Reading from the N-terminus, the 464-residue chain is MPFIPHTEEDVSAMLGAIGAASIEDLFDEIPPALKTGKLKDVPDGLPEMAVARLMQERASQDGFWSNFIGAGVYEHHIPAAIWQITTRGEFYSAYTPYQAEASQGTLQLIYEYQTMMTRLTGLDVSNASLYDGASALAEAVLMAVRSHKSSRRVLVPKTVHPVYRSVVVTTVRNQGIDLVELEYDPATGKTVLPSEPGAFAGLVIPQPNFFGVLEDVHTMTDWTHANGGLAIALVNPTTLAVLEAPGKWGTKGADIAVGEGQPLGAPMASGGPYFGFMCCRQDFVRQMPGRIVGRTVDLDGKPGFALTLQAREQHIRRSKATSNICTNQGLVVTAATQYMALLGPQGLAKVAAASHANTVALAEKLGAIPGVARAFASPCFHEVVLKLDDGTLKGTSAKDVLRALRAQGILGGLDISGWYPELGQAILVCVTETKTGADLDHYAQHLERILSKRREAPPCAYKN.

Belongs to the GcvP family. N-terminal subunit subfamily. The glycine cleavage system is composed of four proteins: P, T, L and H. In this organism, the P 'protein' is a heterodimer of two subunits.

The enzyme catalyses N(6)-[(R)-lipoyl]-L-lysyl-[glycine-cleavage complex H protein] + glycine + H(+) = N(6)-[(R)-S(8)-aminomethyldihydrolipoyl]-L-lysyl-[glycine-cleavage complex H protein] + CO2. In terms of biological role, the glycine cleavage system catalyzes the degradation of glycine. The P protein binds the alpha-amino group of glycine through its pyridoxal phosphate cofactor; CO(2) is released and the remaining methylamine moiety is then transferred to the lipoamide cofactor of the H protein. This Thiobacillus denitrificans (strain ATCC 25259 / T1) protein is Probable glycine dehydrogenase (decarboxylating) subunit 1.